The chain runs to 345 residues: Phosphoribosylformylglycinamidine cyclo-ligase (345 aa).

It belongs to the AIR synthase family.

It is found in the cytoplasm. It catalyses the reaction 2-formamido-N(1)-(5-O-phospho-beta-D-ribosyl)acetamidine + ATP = 5-amino-1-(5-phospho-beta-D-ribosyl)imidazole + ADP + phosphate + H(+). It participates in purine metabolism; IMP biosynthesis via de novo pathway; 5-amino-1-(5-phospho-D-ribosyl)imidazole from N(2)-formyl-N(1)-(5-phospho-D-ribosyl)glycinamide: step 2/2. The protein is Phosphoribosylformylglycinamidine cyclo-ligase of Cronobacter sakazakii (strain ATCC BAA-894) (Enterobacter sakazakii).